The chain runs to 183 residues: Threonylcarbamoyl-AMP synthase (183 aa).

In terms of domain architecture, YrdC-like spans Met-1–Gly-183.

This sequence belongs to the SUA5 family. TsaC subfamily.

The protein localises to the cytoplasm. It catalyses the reaction L-threonine + hydrogencarbonate + ATP = L-threonylcarbamoyladenylate + diphosphate + H2O. Functionally, required for the formation of a threonylcarbamoyl group on adenosine at position 37 (t(6)A37) in tRNAs that read codons beginning with adenine. Catalyzes the conversion of L-threonine, HCO(3)(-)/CO(2) and ATP to give threonylcarbamoyl-AMP (TC-AMP) as the acyladenylate intermediate, with the release of diphosphate. This Haemophilus influenzae (strain PittEE) protein is Threonylcarbamoyl-AMP synthase.